Reading from the N-terminus, the 64-residue chain is Alpha-conotoxin SI (64 aa).

A signal peptide spans 1 to 21; it reads MGMRMMFTVFLLVVLATTVVS. Positions 22 to 49 are excised as a propeptide; it reads FPSDRASDGRDDEAKDERSDMHESDRKE. Residues 23 to 47 are disordered; it reads PSDRASDGRDDEAKDERSDMHESDR. The segment covering 26-47 has biased composition (basic and acidic residues); that stretch reads RASDGRDDEAKDERSDMHESDR. 2 disulfide bridges follow: Cys-51/Cys-56 and Cys-52/Cys-62. At Cys-62 the chain carries Cysteine amide.

Belongs to the conotoxin A superfamily. In terms of tissue distribution, expressed by the venom duct.

It is found in the secreted. Its function is as follows. Alpha-conotoxins act on postsynaptic membranes, they bind to the nicotinic acetylcholine receptors (nAChR) and thus inhibit them. Is active on muscle nAChR (IC(50)=113 nM on adult subtype (alpha-1-beta-1-gamma-delta/CHRNA1-CHRNB1-CHRNG-CHRND) and IC(50)=142 nM on fetal subtype (alpha-1-beta-1-delta-epsilon/CHRNA1-CHRNB1-CHRND-CHRNE)). On mice muscle receptors, its higher affinity site is the alpha/delta nAChR subunit interface. On Torpedo receptors, it does not distinguish between alpha/delta and alpha/gamma acetylcholine-binding sites. In vivo, causes paralysis followed by death when injected into goldfish. In contrast, has no effect on mice, when similar doses are intraperitoneally or intracerebrally injected. The polypeptide is Alpha-conotoxin SI (Conus striatus (Striated cone)).